The chain runs to 639 residues: Threonine--tRNA ligase (639 aa).

Residues 1-62 (MYQLTLPDKS…ETDANIEVLT (62 aa)) enclose the TGS domain. The tract at residues 246–537 (DHRKIGKELD…LIEHYEGKFP (292 aa)) is catalytic. Cys-337, His-388, and His-514 together coordinate Zn(2+).

This sequence belongs to the class-II aminoacyl-tRNA synthetase family. As to quaternary structure, homodimer. It depends on Zn(2+) as a cofactor.

The protein resides in the cytoplasm. It catalyses the reaction tRNA(Thr) + L-threonine + ATP = L-threonyl-tRNA(Thr) + AMP + diphosphate + H(+). Its function is as follows. Catalyzes the attachment of threonine to tRNA(Thr) in a two-step reaction: L-threonine is first activated by ATP to form Thr-AMP and then transferred to the acceptor end of tRNA(Thr). Also edits incorrectly charged L-seryl-tRNA(Thr). This is Threonine--tRNA ligase from Leptospira borgpetersenii serovar Hardjo-bovis (strain JB197).